Consider the following 258-residue polypeptide: HTH-type transcriptional repressor GlcR (258 aa).

One can recognise an HTH deoR-type domain in the interval 3–58 (QEERLVAILDFLKQHNRITTEQICTLLQVSRDTARRDLVKLEEQNAIIRTRGGAIL). Residues 20-39 (ITTEQICTLLQVSRDTARRD) constitute a DNA-binding region (H-T-H motif).

Functionally, plays a role in carbon catabolite repression (CCR). Specifically required for transcriptional repression of the levanase operon by glucose but not by other sugars. The chain is HTH-type transcriptional repressor GlcR (glcR) from Bacillus subtilis (strain 168).